Reading from the N-terminus, the 189-residue chain is MKDIKPAILLFIMFTIICGGIYPALVTGIAHALFPDQAKGSLIIDKAGKELGSNLIGQPFSAPQYLWPRPSVTAEFGYNPSASGGSNSGQTNPDYLKTVAERVKTLRESGMTGLIPTELAQASASGLDPHLSPQAARLQAARIAKARGIPETAVQKLINENTAGPQLGILGAARVNVLAVNLKLDTLTR.

Residues 6 to 26 traverse the membrane as a helical segment; it reads PAILLFIMFTIICGGIYPALV.

It belongs to the KdpC family. The system is composed of three essential subunits: KdpA, KdpB and KdpC.

The protein resides in the cell inner membrane. Its function is as follows. Part of the high-affinity ATP-driven potassium transport (or Kdp) system, which catalyzes the hydrolysis of ATP coupled with the electrogenic transport of potassium into the cytoplasm. This subunit acts as a catalytic chaperone that increases the ATP-binding affinity of the ATP-hydrolyzing subunit KdpB by the formation of a transient KdpB/KdpC/ATP ternary complex. This is Potassium-transporting ATPase KdpC subunit from Trichlorobacter lovleyi (strain ATCC BAA-1151 / DSM 17278 / SZ) (Geobacter lovleyi).